A 372-amino-acid polypeptide reads, in one-letter code: Ciliary neurotrophic factor receptor subunit alpha (372 aa).

The N-terminal stretch at 1 to 22 is a signal peptide; that stretch reads MAAPVPWACCAVLAAAAAVVYA. Residues 27–104 enclose the Ig-like C2-type domain; it reads PQEAPHVQYE…WHLRHQVLLH (78 aa). A disulfide bond links C46 and C89. Residues N60, N70, N142, and N190 are each glycosylated (N-linked (GlcNAc...) asparagine). Fibronectin type-III domains are found at residues 108 to 205 and 206 to 306; these read PPRE…VKPD and PPEN…TEEP. A WSXWS motif motif is present at residues 290–294; that stretch reads WSDWS. The disordered stretch occupies residues 301–340; it reads PWTEEPRHLTTEAQAPETTTSTTSSLAPPPTTKICDPGEL. Residues 311–326 are compositionally biased toward low complexity; it reads TEAQAPETTTSTTSSL. A lipid anchor (GPI-anchor amidated serine) is attached at S342. A propeptide spans 343-372 (removed in mature form); the sequence is GGGPSAPFLIHVPVTLALAAAAATANSLLI.

This sequence belongs to the type I cytokine receptor family. Type 3 subfamily. Forms a heterotrimer with LIFR and IL6ST. Interacts with heterodimeric neurotropic cytokine composed of CLCF1/CLC and CRLF1/CLF-1. Either alone or in complex with the heterodimer CLCF1-CRLF1 interacts with SORL1; this interaction may promote internalization and lysosomal degradation. As to expression, expressed in retina, brain, spleen, lung, liver and kidney. In the retina it is highly expressed by photoreceptors, but also found in the RPE, inner nuclear layer and ganglion cells.

It localises to the cell membrane. In terms of biological role, binds to CNTF. The alpha subunit provides the receptor specificity. This chain is Ciliary neurotrophic factor receptor subunit alpha (CNTFR), found in Canis lupus familiaris (Dog).